Here is a 397-residue protein sequence, read N- to C-terminus: DNA-directed RNA polymerase subunit Rpo1C (397 aa).

Belongs to the RNA polymerase beta' chain family. As to quaternary structure, part of the RNA polymerase complex. An artificial construct of the RNAP clamp domain (including part of this protein) contacts transcription elongation factors Spt4 and Spt5.

Its subcellular location is the cytoplasm. It carries out the reaction RNA(n) + a ribonucleoside 5'-triphosphate = RNA(n+1) + diphosphate. Its function is as follows. DNA-dependent RNA polymerase (RNAP) catalyzes the transcription of DNA into RNA using the four ribonucleoside triphosphates as substrates. Forms part of the jaw domain. The polypeptide is DNA-directed RNA polymerase subunit Rpo1C (Pyrococcus furiosus (strain ATCC 43587 / DSM 3638 / JCM 8422 / Vc1)).